We begin with the raw amino-acid sequence, 90 residues long: UPF0297 protein Swol_0469 (90 aa).

Belongs to the UPF0297 family.

The chain is UPF0297 protein Swol_0469 from Syntrophomonas wolfei subsp. wolfei (strain DSM 2245B / Goettingen).